The chain runs to 245 residues: CTD nuclear envelope phosphatase 1B (245 aa).

The helical transmembrane segment at 7–29 threads the bilayer; it reads CLLGVRTFHGVTSRIWSFFLYIL. One can recognise an FCP1 homology domain in the interval 58-225; sequence NNVKRKILVL…LNLLPMLDAL (168 aa).

This sequence belongs to the dullard family.

The protein resides in the endoplasmic reticulum membrane. Its subcellular location is the nucleus membrane. The enzyme catalyses O-phospho-L-seryl-[protein] + H2O = L-seryl-[protein] + phosphate. The catalysed reaction is O-phospho-L-threonyl-[protein] + H2O = L-threonyl-[protein] + phosphate. Serine/threonine protein phosphatase that may dephosphorylate and activate lipins. Lipins are phosphatidate phosphatases that catalyze the conversion of phosphatidic acid to diacylglycerol and control the metabolism of fatty acids at different levels. May indirectly modulate the lipid composition of nuclear and/or endoplasmic reticulum membranes and be required for proper nuclear membrane morphology and/or dynamics. May also indirectly regulate the production of lipid droplets and triacylglycerol. May antagonize BMP signaling. This is CTD nuclear envelope phosphatase 1B (ctdnep1b) from Danio rerio (Zebrafish).